The primary structure comprises 382 residues: PPE family protein PPE44 (382 aa).

Belongs to the mycobacterial PPE family.

The protein localises to the secreted. It is found in the cell wall. It localises to the cell surface. In terms of biological role, virulence factor that modulates host innate immune response. In Mycobacterium tuberculosis (strain CDC 1551 / Oshkosh), this protein is PPE family protein PPE44.